Consider the following 1133-residue polypeptide: DNA-directed RNA polymerase III subunit RPC2 (1133 aa).

RNA is bound at residue Lys186. Arg195 provides a ligand contact to DNA. Arg213 provides a ligand contact to RNA. Asp432 contacts DNA. Gln438 and Gln692 together coordinate RNA. Asp753 is a Mg(2+) binding site. Residues Lys896, Lys904, and Lys1019 each contribute to the RNA site. The DNA site is built by Arg1039, Ser1040, and Arg1046. Positions 1080, 1083, 1092, and 1095 each coordinate Zn(2+). A C4-type zinc finger spans residues 1080–1095; the sequence is CGQCGLLGYSGWCHYC.

Belongs to the RNA polymerase beta chain family. Component of the RNA polymerase III (Pol III) complex consisting of 17 subunits: a ten-subunit catalytic core composed of POLR3A/RPC1, POLR3B/RPC2, POLR1C/RPAC1, POLR1D/RPAC2, POLR3K/RPC10, POLR2E/RPABC1, POLR2F/RPABC2, POLR2H/RPABC3, POLR2K/RPABC4 and POLR2L/RPABC5; a mobile stalk composed of two subunits POLR3H/RPC8 and CRCP/RPC9, protruding from the core and functioning primarily in transcription initiation; and additional subunits homologous to general transcription factors of the RNA polymerase II machinery, POLR3C/RPC3-POLR3F/RPC6-POLR3G/RPC7 heterotrimer required for transcription initiation and POLR3D/RPC4-POLR3E/RPC5 heterodimer involved in both transcription initiation and termination. Requires Mg(2+) as cofactor.

The protein localises to the nucleus. The protein resides in the cytoplasm. It localises to the cytosol. The enzyme catalyses RNA(n) + a ribonucleoside 5'-triphosphate = RNA(n+1) + diphosphate. Functionally, catalytic core component of RNA polymerase III (Pol III), a DNA-dependent RNA polymerase which synthesizes small non-coding RNAs using the four ribonucleoside triphosphates as substrates. Synthesizes 5S rRNA, snRNAs, tRNAs and miRNAs from at least 500 distinct genomic loci. Pol III-mediated transcription cycle proceeds through transcription initiation, transcription elongation and transcription termination stages. During transcription initiation, Pol III is recruited to DNA promoters type I, II or III with the help of general transcription factors and other specific initiation factors. Once the polymerase has escaped from the promoter it enters the elongation phase during which RNA is actively polymerized, based on complementarity with the template DNA strand. Transcription termination involves the release of the RNA transcript and polymerase from the DNA. Forms Pol III active center together with the largest subunit POLR3A/RPC1. A single-stranded DNA template strand of the promoter is positioned within the central active site cleft of Pol III. Appends one nucleotide at a time to the 3' end of the nascent RNA, with POLR3A/RPC1 contributing a Mg(2+)-coordinating DxDGD motif, and POLR3B/RPC2 participating in the coordination of a second Mg(2+) ion and providing lysine residues believed to facilitate Watson-Crick base pairing between the incoming nucleotide and template base. Typically, Mg(2+) ions direct a 5' nucleoside triphosphate to form a phosphodiester bond with the 3' hydroxyl of the preceding nucleotide of the nascent RNA, with the elimination of pyrophosphate. Pol III plays a key role in sensing and limiting infection by intracellular bacteria and DNA viruses. Acts as a nuclear and cytosolic DNA sensor involved in innate immune response. Can sense non-self dsDNA that serves as template for transcription into dsRNA. The non-self RNA polymerase III transcripts, such as Epstein-Barr virus-encoded RNAs (EBERs) induce type I interferon and NF-kappa-B through the RIG-I pathway. The chain is DNA-directed RNA polymerase III subunit RPC2 from Homo sapiens (Human).